Reading from the N-terminus, the 62-residue chain is uncharacterized protein (62 aa).

The protein localises to the plastid. It is found in the chloroplast. This is an uncharacterized protein from Guillardia theta (Cryptophyte).